A 718-amino-acid polypeptide reads, in one-letter code: NF-kappa-B inhibitor zeta (718 aa).

The span at M1–R17 shows a compositional bias: basic and acidic residues. 2 disordered regions span residues M1–A20 and S58–R108. Positions S58–E83 are enriched in low complexity. Over residues S84–V97 the composition is skewed to basic and acidic residues. The 23-residue stretch at R108–H130 folds into the OCA domain. The Nuclear localization signal motif lies at K164–R179. A disordered region spans residues Q186–E211. Basic and acidic residues predominate over residues E201 to E211. The required for transcriptional activity stretch occupies residues A321–S394. The segment at M404–Y718 is interaction with NFKB1/p50. 7 ANK repeats span residues D443–M472, N479–T508, W512–Q541, D551–E580, Q582–A607, S612–F641, and N648–T681.

As to quaternary structure, interacts with NFKB1/p50. Interacts with RELA. Interacts with AKIRIN2. In terms of tissue distribution, expressed at high levels in peripheral blood leukocytes and lung, at moderate levels in liver, placenta, and at low levels in spleen, kidney, skeletal muscle and heart.

The protein localises to the nucleus. In terms of biological role, involved in regulation of NF-kappa-B transcription factor complexes. Inhibits NF-kappa-B activity without affecting its nuclear translocation upon stimulation. Inhibits DNA-binding of RELA and NFKB1/p50, and of the NF-kappa-B p65-p50 heterodimer and the NF-kappa-B p50-p50 homodimer. Also seems to activate NF-kappa-B-mediated transcription. In vitro, upon association with NFKB1/p50 has transcriptional activation activity and, together with NFKB1/p50 and RELA, is recruited to LCN2 promoters. Promotes transcription of LCN2 and DEFB4. Is recruited to IL-6 promoters and activates IL-6 but decreases TNF-alpha production in response to LPS. Seems to be involved in the induction of inflammatory genes activated through TLR/IL-1 receptor signaling. Involved in the induction of T helper 17 cells (Th17) differentiation upon recognition of antigen by T cell antigen receptor (TCR). The sequence is that of NF-kappa-B inhibitor zeta (NFKBIZ) from Homo sapiens (Human).